Consider the following 15281-residue polypeptide: Cyclosporin synthetase simA (15281 aa).

Positions 34 to 463 are condensation 1; the sequence is SFAQGRLWFL…AVHVKTMPLT (430 aa). An adenylation 1 region spans residues 513-918; that stretch reads SYSELDHKSD…NSDQVRDAAV (406 aa). The region spanning 1026-1100 is the Carrier 1 domain; it reads APRNEIEAVL…DLAATIQRGS (75 aa). Serine 1060 carries the O-(pantetheine 4'-phosphoryl)serine modification. The segment at 1118–1549 is condensation 2; sequence SFAQGRLWFL…QTPIMTMPLT (432 aa). Positions 1599–2004 are adenylation 2; that stretch reads SYAELDQRSD…SSAGVHDAVV (406 aa). The segment at 2067–2251 is methyltransferase (M) domain 1; the sequence is SWTSMYDGTL…LEELEEELLV (185 aa). The 75-residue stretch at 2524–2598 folds into the Carrier 2 domain; it reads APRDSIEAII…DLAATIQQDT (75 aa). Serine 2558 is subject to O-(pantetheine 4'-phosphoryl)serine. A condensation 3 region spans residues 2616–3044; it reads SFAQGRLWFL…EPDMPVASMA (429 aa). Positions 3096-3498 are adenylation 3; it reads SYADLDRKSD…SHDLVTDAAV (403 aa). The tract at residues 3562–3749 is methyltransferase (M) domain 2; it reads SMYDGSLIKK…EDELLVDPAF (188 aa). A Carrier 3 domain is found at 4011-4085; it reads APRTEIERVL…DLVLIVQQGS (75 aa). The residue at position 4045 (serine 4045) is an O-(pantetheine 4'-phosphoryl)serine. Residues 4100–4530 form a condensation 4 region; sequence VPQSFAQGRL…GPDVPISTLP (431 aa). The tract at residues 4582-4986 is adenylation 4; it reads SYAQLDRESD…FLNDGFVEDV (405 aa). A methyltransferase (M) domain 3 region spans residues 5052–5241; that stretch reads TSMYDGTEID…ELLVDPAFFT (190 aa). The Carrier 4 domain occupies 5503–5577; that stretch reads PPRNSVEATV…DLAAVIQRNS (75 aa). Residue serine 5537 is modified to O-(pantetheine 4'-phosphoryl)serine. Residues 5592–6023 are condensation 5; the sequence is VPQSFAQGRL…QPLTPLAVLP (432 aa). Residues 6075–6478 form an adenylation 5 region; the sequence is TYAQLDQQSD…SHNSVQDAAV (404 aa). The segment at 6545–6729 is methyltransferase (M) domain 4; sequence WTSMYDGSEI…ELEANEEELL (185 aa). The Carrier 5 domain maps to 7000–7074; sequence APRNEIEAIL…DLAASIQRES (75 aa). At serine 7034 the chain carries O-(pantetheine 4'-phosphoryl)serine. The condensation 6 stretch occupies residues 7092–7517; the sequence is SFAQGRLWFL…VLDQPLTPIS (426 aa). The adenylation 6 stretch occupies residues 7572-7976; the sequence is TYAQLDEQSD…DHKSVLAATV (405 aa). In terms of domain architecture, Carrier 6 spans 8060–8134; it reads PPRDEVEAVL…DLADIIRRGS (75 aa). Serine 8094 is subject to O-(pantetheine 4'-phosphoryl)serine. The segment at 8152–8582 is condensation 7; sequence SFAQGRLWFL…PKQRLMAMPI (431 aa). An adenylation 7 region spans residues 8633–9038; it reads TYADLDGQSN…GHDLVHDAAV (406 aa). The methyltransferase (M) domain 5 stretch occupies residues 9111–9288; sequence PVNEMKEWLD…EESEEELLVD (178 aa). In terms of domain architecture, Carrier 7 spans 9555–9629; the sequence is APRNDTEIVL…DLAASIEQGS (75 aa). Serine 9589 is subject to O-(pantetheine 4'-phosphoryl)serine. A condensation 8 region spans residues 9647 to 10077; sequence SYAQGRLWFL…QVSISTMPLT (431 aa). An adenylation 8 region spans residues 10127-10529; the sequence is SYTSLDQKSE…GNKAIHDAAV (403 aa). The methyltransferase (M) domain 6 stretch occupies residues 10588–10768; it reads RDFTSWTSMY…DQIRQEVARL (181 aa). Residues 11052-11126 form the Carrier 8 domain; it reads APRNDIEAVL…DLADVVQTGS (75 aa). At serine 11086 the chain carries O-(pantetheine 4'-phosphoryl)serine. Positions 11144–11567 are condensation 9; the sequence is SFSQGRLWFL…HANLATLPLT (424 aa). Residues 11616–12019 are adenylation 9; the sequence is TYTELDERSS…RDPAISDSAV (404 aa). One can recognise a Carrier 9 domain in the interval 12124-12198; sequence APRNDIETII…QLAASIQQGS (75 aa). The residue at position 12158 (serine 12158) is an O-(pantetheine 4'-phosphoryl)serine. Residues 12216-12645 are condensation 10; the sequence is SFAQGRLWFL…IAISTMPLVD (430 aa). Residues 12696–13096 form an adenylation 10 region; sequence TYAELDQQSD…SDSSINDAVV (401 aa). Residues 13162 to 13343 form a methyltransferase (M) domain 7 region; the sequence is YDGSLIPREE…EDDEEELLVD (182 aa). A Carrier 10 domain is found at 13620–13694; it reads APRTEIEVVL…DLAASILQGS (75 aa). The residue at position 13654 (serine 13654) is an O-(pantetheine 4'-phosphoryl)serine. Residues 13710-14143 form a condensation 11 region; that stretch reads EQSFAQGRLW…PQSPIATMPL (434 aa). An adenylation 11 region spans residues 14194 to 14598; sequence TYAELDRLSD…SENSVTDAAV (405 aa). In terms of domain architecture, Carrier 11 spans 14695-14769; that stretch reads APRNETEAAI…SLAGKLEQQQ (75 aa). O-(pantetheine 4'-phosphoryl)serine is present on serine 14729. Residues 14814-15158 form a condensation 12 region; that stretch reads DMYPATQTQI…HPEAEIEGQQ (345 aa). The segment at 15169 to 15224 is disordered; that stretch reads QARQANGHAPNGTNGTNGTNGTNGANGTNGTNGTNGTHANGINGSNGVNGRDSNVV. Residues 15173–15211 show a composition bias toward low complexity; that stretch reads ANGHAPNGTNGTNGTNGTNGANGTNGTNGTNGTHANGIN. Residues 15213–15224 are compositionally biased toward polar residues; the sequence is SNGVNGRDSNVV.

It belongs to the NRP synthetase family. Pantetheine 4'-phosphate serves as cofactor.

Nonribosomal peptide synthetase; part of the gene cluster that mediates the biosynthesis of the cycloundecapeptide cyclosporin A (CsA), a compound with antifungal activity used as an immunosuppressant drug. Cyclosporin A contains three non-proteinogenic amino acids: D-alanine, alpha-amino butyric acid and the unusual amino acid (4R)-4-[(E)-2-butenyl]-4-methyl-l-threonine (Bmt). The nonribosomal peptide synthetase (NRPS) catalyzes the elongation and cyclization of the undecapeptide chain. SimA contains 11 modules responsible for sequential uptake of substrates and chain elongation. In addition to the core condensation-adenylation-thiolation (C-A-T) domains present in each module, seven modules contain an additional N-methylation (M) domain (modules 2, 3, 4, 5, 7, 8, and 10). The terminal C domain (C12 or Ct) is implicated in cyclization of the peptidyl chains to form CsA. The first module (A1) takes up D-Ala which is provided by the alanine racemase simB. The A2, A3, A8, and A10 domains have the same substrate-specific signature for recognition of leucine residues. The unusual amino acid (4R)-4-[(E)-2-butenyl]-4-methyl-l-threonine (Bmt) is recognized by the fifth module (A5). The A11 domain recognizes L-Ala. The PKS simG mediates the biosynthesis of 3R-hydroxyl-4R-methyl-6E-octenoic acid from acetyl coenzyme A (acetyl-CoA), malonyl-CoA, and S-adenosylmethionine, and 3R-hydroxyl-4R-methyl-6E-octenoic acid is then be repeatedly oxidized by simI to 3R-hydroxy-4R-methyl-2-keto-6E-octenoic acid. The latter is likely converted to Bmt through the action of the aminotransferase SimJ. The chain is Cyclosporin synthetase simA from Tolypocladium inflatum (Cyclosporin fungus).